A 368-amino-acid chain; its full sequence is MATTAQYIPRNNSLPSNPLMHPDSDRMHQGTTYREVQKMMHHEYLQGLATNTGHPMSLTHHQWLPTSNTDWTSGTHIGQAEHNKASVQSREDLGNGYHRSHLVHQPTQNSHHGSWAPTTTHHLSPLSPASNGHQSLVYSQTGYTMLSPQPSLHHGLRDPLHDDAGSHDNQMESPQQPFSHHQDHSDEDAPSSDDLEQFAKQFKQRRIKLGFTQADVGLALGTLYGNVFSQTTICRFEALQLSFKNMCKLKPLLNKWLEETDSNTGSPTNLDKIAAQGRKRKKRTSIEVGVKGALENHFLKCPKPSAHEITTLAGTLQLEKEVVRVWFCNRRQKEKRMTPVGVPHPTMEDVYSQAETPPLHHTLQSPVQ.

Over residues 1-16 the composition is skewed to polar residues; sequence MATTAQYIPRNNSLPS. 4 disordered regions span residues 1-28, 69-88, 100-134, and 147-193; these read MATT…DRMH, TDWT…ASVQ, SHLV…NGHQ, and SPQP…PSSD. Residues 79–88 are compositionally biased toward basic and acidic residues; it reads QAEHNKASVQ. Positions 105–134 are enriched in polar residues; sequence QPTQNSHHGSWAPTTTHHLSPLSPASNGHQ. The segment covering 155–170 has biased composition (basic and acidic residues); sequence GLRDPLHDDAGSHDNQ. A POU-specific domain is found at 187–261; it reads EDAPSSDDLE…LLNKWLEETD (75 aa). Residues 279–338 constitute a DNA-binding region (homeobox); that stretch reads KRKKRTSIEVGVKGALENHFLKCPKPSAHEITTLAGTLQLEKEVVRVWFCNRRQKEKRMT.

Belongs to the POU transcription factor family. Class-3 subfamily. Predominantly expressed in the embryonic and adult central nervous system.

The protein resides in the nucleus. Functionally, transcription factor that may play important roles in patterning the embryonic brain. Could directly respond to the reception of the sonic hedgehog (shh) signal. The protein is POU domain, class 3, transcription factor 1 (pou3f1) of Danio rerio (Zebrafish).